A 488-amino-acid chain; its full sequence is Glutamyl-tRNA(Gln) amidotransferase subunit A (488 aa).

Active-site charge relay system residues include K77 and S152. Catalysis depends on S176, which acts as the Acyl-ester intermediate.

This sequence belongs to the amidase family. GatA subfamily. Heterotrimer of A, B and C subunits.

The enzyme catalyses L-glutamyl-tRNA(Gln) + L-glutamine + ATP + H2O = L-glutaminyl-tRNA(Gln) + L-glutamate + ADP + phosphate + H(+). In terms of biological role, allows the formation of correctly charged Gln-tRNA(Gln) through the transamidation of misacylated Glu-tRNA(Gln) in organisms which lack glutaminyl-tRNA synthetase. The reaction takes place in the presence of glutamine and ATP through an activated gamma-phospho-Glu-tRNA(Gln). This chain is Glutamyl-tRNA(Gln) amidotransferase subunit A, found in Streptococcus mutans serotype c (strain ATCC 700610 / UA159).